The sequence spans 408 residues: Ribulose bisphosphate carboxylase/oxygenase activase, chloroplastic (408 aa).

Residues 1–32 constitute a chloroplast transit peptide; that stretch reads MQVTMKSSAVSGQRVGGARVATRSVRRAQLQV. 138–145 lines the ATP pocket; sequence GGKGQGKT.

Belongs to the RuBisCO activase family. Monomer.

The protein localises to the plastid. The protein resides in the chloroplast stroma. Activation of RuBisCO (ribulose-1,5-bisphosphate carboxylase/oxygenase; EC 4.1.1.39) involves the ATP-dependent carboxylation of the epsilon-amino group of lysine leading to a carbamate structure. The sequence is that of Ribulose bisphosphate carboxylase/oxygenase activase, chloroplastic from Chlamydomonas reinhardtii (Chlamydomonas smithii).